The sequence spans 831 residues: DNA ligase (831 aa).

NAD(+) contacts are provided by residues 34 to 38 (DADYD), 83 to 84 (SL), and Glu-114. The active-site N6-AMP-lysine intermediate is the Lys-116. 4 residues coordinate NAD(+): Arg-137, Glu-174, Lys-291, and Lys-315. Cys-409, Cys-412, Cys-427, and Cys-433 together coordinate Zn(2+). A BRCT domain is found at 749–831 (AHTAPLNGQS…LDFLEQYSAQ (83 aa)).

Belongs to the NAD-dependent DNA ligase family. LigA subfamily. Mg(2+) is required as a cofactor. The cofactor is Mn(2+).

It carries out the reaction NAD(+) + (deoxyribonucleotide)n-3'-hydroxyl + 5'-phospho-(deoxyribonucleotide)m = (deoxyribonucleotide)n+m + AMP + beta-nicotinamide D-nucleotide.. Functionally, DNA ligase that catalyzes the formation of phosphodiester linkages between 5'-phosphoryl and 3'-hydroxyl groups in double-stranded DNA using NAD as a coenzyme and as the energy source for the reaction. It is essential for DNA replication and repair of damaged DNA. In Xylella fastidiosa (strain M12), this protein is DNA ligase.